A 190-amino-acid chain; its full sequence is Protein A52 (190 aa).

This sequence belongs to the orthopoxvirus A52R protein family. As to quaternary structure, interacts with host TRAF6 and IRAK2.

In terms of biological role, bcl-2-like protein which targets host toll-like receptor signaling complexes to suppress innate immune response. Interacts with host TRAF6 to activate p38 and subsequently induce the expression of several cytokines such as IL-10. Also associates with host IRAK2 to inhibit NF-kappa-B signaling. The polypeptide is Protein A52 (Homo sapiens (Human)).